The primary structure comprises 142 residues: Small heat shock protein IbpB (142 aa).

A sHSP domain is found at 26-137 (AGESQSFPPY…APQRIAISER (112 aa)).

It belongs to the small heat shock protein (HSP20) family. As to quaternary structure, homodimer. Forms homomultimers of about 100-150 subunits at optimal growth temperatures. Conformation changes to oligomers at high temperatures or high ionic concentrations. The decrease in size of the multimers is accompanied by an increase in chaperone activity.

It is found in the cytoplasm. In terms of biological role, associates with aggregated proteins, together with IbpA, to stabilize and protect them from irreversible denaturation and extensive proteolysis during heat shock and oxidative stress. Aggregated proteins bound to the IbpAB complex are more efficiently refolded and reactivated by the ATP-dependent chaperone systems ClpB and DnaK/DnaJ/GrpE. Its activity is ATP-independent. This is Small heat shock protein IbpB from Klebsiella pneumoniae (strain 342).